Here is a 159-residue protein sequence, read N- to C-terminus: Cytochrome c-type biogenesis protein CcmE (159 aa).

Residues 1-8 (MNPRRKTR) lie on the Cytoplasmic side of the membrane. Residues 9-29 (LWVALTVLAGLGLTMALVLYA) form a helical; Signal-anchor for type II membrane protein membrane-spanning segment. Over 30 to 159 (LRANIDLFYT…PPQAYKDNRP (130 aa)) the chain is Periplasmic. Heme contacts are provided by His130 and Tyr134. The segment at 130 to 159 (HDENYTPPEVKAAMDANHTRPPQAYKDNRP) is disordered.

This sequence belongs to the CcmE/CycJ family.

The protein resides in the cell inner membrane. Heme chaperone required for the biogenesis of c-type cytochromes. Transiently binds heme delivered by CcmC and transfers the heme to apo-cytochromes in a process facilitated by CcmF and CcmH. The sequence is that of Cytochrome c-type biogenesis protein CcmE from Cronobacter sakazakii (strain ATCC BAA-894) (Enterobacter sakazakii).